The primary structure comprises 392 residues: 23S rRNA (uracil(747)-C(5))-methyltransferase RlmC (392 aa).

Residues Cys4, Cys12, Cys15, and Cys93 each coordinate [4Fe-4S] cluster. Gln218, Phe247, Glu275, and Asn321 together coordinate S-adenosyl-L-methionine. Cys348 acts as the Nucleophile in catalysis.

This sequence belongs to the class I-like SAM-binding methyltransferase superfamily. RNA M5U methyltransferase family. RlmC subfamily.

It carries out the reaction uridine(747) in 23S rRNA + S-adenosyl-L-methionine = 5-methyluridine(747) in 23S rRNA + S-adenosyl-L-homocysteine + H(+). Its function is as follows. Catalyzes the formation of 5-methyl-uridine at position 747 (m5U747) in 23S rRNA. The chain is 23S rRNA (uracil(747)-C(5))-methyltransferase RlmC from Haemophilus influenzae (strain PittGG).